A 268-amino-acid polypeptide reads, in one-letter code: Mitochondrial distribution and morphology protein 12 (268 aa).

The 256-residue stretch at 1-256 (MSFEINWQDL…WPSWINLDFN (256 aa)) folds into the SMP-LTD domain. Residues 75-94 (LPKDKIPEESDSGCQSADGE) form a disordered region.

This sequence belongs to the MDM12 family. Component of the ER-mitochondria encounter structure (ERMES) or MDM complex, composed of MMM1, MDM10, MDM12 and MDM34. An MMM1 homodimer associates with one molecule of MDM12 on each side in a pairwise head-to-tail manner, and the SMP-LTD domains of MMM1 and MDM12 generate a continuous hydrophobic tunnel for phospholipid trafficking.

It is found in the mitochondrion outer membrane. It localises to the endoplasmic reticulum membrane. In terms of biological role, component of the ERMES/MDM complex, which serves as a molecular tether to connect the endoplasmic reticulum (ER) and mitochondria. Components of this complex are involved in the control of mitochondrial shape and protein biogenesis, and function in nonvesicular lipid trafficking between the ER and mitochondria. MDM12 is required for the interaction of the ER-resident membrane protein MMM1 and the outer mitochondrial membrane-resident beta-barrel protein MDM10. The MDM12-MMM1 subcomplex functions in the major beta-barrel assembly pathway that is responsible for biogenesis of all mitochondrial outer membrane beta-barrel proteins, and acts in a late step after the SAM complex. The MDM10-MDM12-MMM1 subcomplex further acts in the TOM40-specific pathway after the action of the MDM12-MMM1 complex. Essential for establishing and maintaining the structure of mitochondria and maintenance of mtDNA nucleoids. This is Mitochondrial distribution and morphology protein 12 from Lachancea thermotolerans (strain ATCC 56472 / CBS 6340 / NRRL Y-8284) (Yeast).